We begin with the raw amino-acid sequence, 342 residues long: tRNA N6-adenosine threonylcarbamoyltransferase (342 aa).

Fe cation is bound by residues histidine 111 and histidine 115. Substrate-binding positions include 134-138 (LVSGG), aspartate 167, glycine 180, and asparagine 277. Fe cation is bound at residue aspartate 305.

This sequence belongs to the KAE1 / TsaD family. Fe(2+) serves as cofactor.

It localises to the cytoplasm. The enzyme catalyses L-threonylcarbamoyladenylate + adenosine(37) in tRNA = N(6)-L-threonylcarbamoyladenosine(37) in tRNA + AMP + H(+). Its function is as follows. Required for the formation of a threonylcarbamoyl group on adenosine at position 37 (t(6)A37) in tRNAs that read codons beginning with adenine. Is involved in the transfer of the threonylcarbamoyl moiety of threonylcarbamoyl-AMP (TC-AMP) to the N6 group of A37, together with TsaE and TsaB. TsaD likely plays a direct catalytic role in this reaction. The sequence is that of tRNA N6-adenosine threonylcarbamoyltransferase from Haemophilus influenzae (strain ATCC 51907 / DSM 11121 / KW20 / Rd).